A 608-amino-acid chain; its full sequence is Bifunctional lycopene cyclase/phytoene synthase (608 aa).

The lycopene beta-cyclase stretch occupies residues 1 to 240; the sequence is MSILTYLEFH…LVFATCAIDR (240 aa). The next 7 helical transmembrane spans lie at 3 to 23, 37 to 56, 80 to 97, 117 to 137, 150 to 170, 175 to 195, and 218 to 238; these read ILTY…ALCW, YKFL…NYIV, YMFF…SNFV, LLVR…AWHL, ILWY…EYIL, AVLL…IVAI, and VEEC…TCAI. The interval 247-608 is phytoene synthase; sequence LYKSSVQNQN…ARKIKSFFVD (362 aa).

The protein in the N-terminal section; belongs to the lycopene beta-cyclase family. It in the C-terminal section; belongs to the phytoene/squalene synthase family.

It is found in the membrane. It catalyses the reaction all-trans-lycopene = gamma-carotene. It carries out the reaction gamma-carotene = all-trans-beta-carotene. The catalysed reaction is 2 (2E,6E,10E)-geranylgeranyl diphosphate = 15-cis-phytoene + 2 diphosphate. The protein operates within carotenoid biosynthesis; beta-carotene biosynthesis. Its pathway is carotenoid biosynthesis; phytoene biosynthesis; all-trans-phytoene from geranylgeranyl diphosphate: step 1/1. Bifunctional enzyme that catalyzes the reactions from geranylgeranyl diphosphate to phytoene (phytoene synthase) and lycopene to beta-carotene via the intermediate gamma-carotene (lycopene cyclase). This chain is Bifunctional lycopene cyclase/phytoene synthase, found in Blakeslea trispora (Choanephora trispora).